Here is a 1114-residue protein sequence, read N- to C-terminus: Proto-oncogene tyrosine-protein kinase receptor Ret (1114 aa).

The N-terminal stretch at Met1–Gly28 is a signal peptide. Residues Leu29–Ser153 are cadherin-like region 1 (CLD1). The Extracellular portion of the chain corresponds to Leu29–Arg635. Residue Asn98 is glycosylated (N-linked (GlcNAc...) asparagine). A disulfide bridge links Cys137 with Cys142. Residue Asn151 is glycosylated (N-linked (GlcNAc...) asparagine). Disulfide bonds link Cys157–Cys197 and Cys166–Cys243. A Cadherin domain is found at Pro168–Phe272. Residues Glu178 and Asn179 each contribute to the Ca(2+) site. N-linked (GlcNAc...) asparagine glycosylation is present at Asn199. 9 residues coordinate Ca(2+): Asp230, Glu232, Asp264, Glu265, Asp266, Asp267, Ser268, Asp300, and Asp302. Residues Glu265–Ser379 are cadherin-like region 3 (CLD3). 5 N-linked (GlcNAc...) asparagine glycosylation sites follow: Asn336, Asn343, Asn361, Asn367, and Asn377. Position 378 (Asp378) interacts with Ca(2+). Residue Asn394 is glycosylated (N-linked (GlcNAc...) asparagine). The segment at Pro405 to Gly506 is cadherin-like region 4 (CLD4). Cysteines 426 and 430 form a disulfide. Residues Asn448 and Asn468 are each glycosylated (N-linked (GlcNAc...) asparagine). Intrachain disulfides connect Cys449/Cys478, Cys515/Cys531, Cys519/Cys541, and Cys528/Cys558. Residue Asn554 is glycosylated (N-linked (GlcNAc...) asparagine). Thr564, Cys565, Asp567, His569, Glu574, and Asp584 together coordinate Ca(2+). Intrachain disulfides connect Cys565–Cys581, Cys570–Cys585, Cys609–Cys620, Cys611–Cys618, and Cys630–Cys634. Residues Thr636–Ile657 traverse the membrane as a helical segment. Over His658–Ser1114 the chain is Cytoplasmic. Phosphotyrosine; by autocatalysis is present on Tyr687. O-linked (GlcNAc) serine glycosylation occurs at Ser688. Ser696 bears the Phosphoserine mark. Residues Leu724–Leu1016 enclose the Protein kinase domain. Residues Leu730 to Val738 and Lys758 each bind ATP. Glu805 to Ala807 provides a ligand contact to semaxanib. A phosphotyrosine; by autocatalysis mark is found at Tyr806, Tyr809, and Tyr826. Asp874 (proton acceptor) is an active-site residue. A phosphotyrosine; by autocatalysis mark is found at Tyr900, Tyr905, Tyr981, Tyr1015, Tyr1029, Tyr1062, Tyr1090, and Tyr1096.

Belongs to the protein kinase superfamily. Tyr protein kinase family. In terms of assembly, phosphorylated form interacts with the PBT domain of DOK2, DOK4 and DOK5. The phosphorylated form interacts with PLCG1 and GRB7. Interacts (not phosphorylated) with PTK2/FAK1 (via FERM domain). Extracellular cell-membrane anchored RET cadherin fragments form complex in neurons with reduced trophic status, preferentially at the contact sites between somas. Interacts with AIP in the pituitary gland; this interaction prevents the formation of the AIP-survivin complex. Interacts (inactive) with CBLC and CD2AP; dissociates upon activation by GDNF which increases CBLC:CD2AP interaction. It depends on Ca(2+) as a cofactor. Post-translationally, autophosphorylated on C-terminal tyrosine residues upon ligand stimulation. Proteolytically cleaved by caspase-3. The soluble RET kinase fragment is able to induce cell death. The extracellular cell-membrane anchored RET cadherin fragment accelerates cell adhesion in sympathetic neurons.

Its subcellular location is the cell membrane. It localises to the endosome membrane. The catalysed reaction is L-tyrosyl-[protein] + ATP = O-phospho-L-tyrosyl-[protein] + ADP + H(+). With respect to regulation, repressed by 4-(3-hydroxyanilino)-quinolines derivatives, indolin-2-one-derivatives, 2-(alkylsulfanyl)-4-(3-thienyl) nicotinonitrile analogs, 3- and 4-substituted beta-carbolin-1-ones, vandetanib, motesanib, sorafenib (BAY 43-9006), cabozantinib (XL184), lenvatinib, sunitinib, nintedanib, and withaferin A (WA). Inactivation by sorafenib both reduces kinase activity and promotes lysosomal degradation. Its function is as follows. Receptor tyrosine-protein kinase involved in numerous cellular mechanisms including cell proliferation, neuronal navigation, cell migration, and cell differentiation in response to glia cell line-derived growth family factors (GDNF, NRTN, ARTN, PSPN and GDF15). In contrast to most receptor tyrosine kinases, RET requires not only its cognate ligands but also coreceptors, for activation. GDNF ligands (GDNF, NRTN, ARTN, PSPN and GDF15) first bind their corresponding GDNFR coreceptors (GFRA1, GFRA2, GFRA3, GFRA4 and GFRAL, respectively), triggering RET autophosphorylation and activation, leading to activation of downstream signaling pathways, including the MAPK- and AKT-signaling pathways. Acts as a dependence receptor via the GDNF-GFRA1 signaling: in the presence of the ligand GDNF in somatotrophs within pituitary, promotes survival and down regulates growth hormone (GH) production, but triggers apoptosis in absence of GDNF. Required for the molecular mechanisms orchestration during intestine organogenesis via the ARTN-GFRA3 signaling: involved in the development of enteric nervous system and renal organogenesis during embryonic life, and promotes the formation of Peyer's patch-like structures, a major component of the gut-associated lymphoid tissue. Mediates, through interaction with GDF15-receptor GFRAL, GDF15-induced cell-signaling in the brainstem which triggers an aversive response, characterized by nausea, vomiting, and/or loss of appetite in response to various stresses. Modulates cell adhesion via its cleavage by caspase in sympathetic neurons and mediates cell migration in an integrin (e.g. ITGB1 and ITGB3)-dependent manner. Also active in the absence of ligand, triggering apoptosis through a mechanism that requires receptor intracellular caspase cleavage. Triggers the differentiation of rapidly adapting (RA) mechanoreceptors. Involved in the development of the neural crest. Regulates nociceptor survival and size. Phosphorylates PTK2/FAK1. Isoform 1 in complex with GFRAL induces higher activation of MAPK-signaling pathway than isoform 2 in complex with GFRAL. The polypeptide is Proto-oncogene tyrosine-protein kinase receptor Ret (Homo sapiens (Human)).